The chain runs to 490 residues: 5-hydroxytryptamine receptor 3A (490 aa).

A signal peptide spans 1-19 (MVLWLQLALLALLLPTSLA). Residues 20–249 (QGEVRGKGTA…FYVVIRRRPL (230 aa)) are Extracellular-facing. 4 N-linked (GlcNAc...) asparagine glycosylation sites follow: Asn33, Asn109, Asn175, and Asn191. An intrachain disulfide couples Cys162 to Cys176. The helical transmembrane segment at 250–270 (FYAVTLLLPSIFLMIVDIVGF) threads the bilayer. Over 271–285 (YLPPDSGERVSFKIT) the chain is Cytoplasmic. Residues 286-306 (LLLGYSVFLIIVSDTLPATAI) traverse the membrane as a helical segment. Topologically, residues 307 to 312 (GTPLIS) are extracellular. The chain crosses the membrane as a helical span at residues 313 to 333 (VYFVVCMALLVISLAETILIV). At 334 to 467 (RLVHKQDLQQ…GSVLDKLLFR (134 aa)) the chain is on the cytoplasmic side. Positions 401–422 (GGPQDLEKTSRGRGSPPPPPRE) are disordered. The tract at residues 426–462 (AMCGLLQELASIRHFLEKREETREVARDWLRVGSVLD) is HA-stretch; determines single-channel conductance in 5-HT3 receptors. A helical membrane pass occupies residues 468–488 (VYLLAVLAYSITLVTLWSVWH). Residues 489 to 490 (YA) lie on the Extracellular side of the membrane.

It belongs to the ligand-gated ion channel (TC 1.A.9) family. 5-hydroxytryptamine receptor (TC 1.A.9.2) subfamily. HTR3A sub-subfamily. In terms of assembly, forms homopentameric as well as heteropentameric serotonin-activated cation-selective channel complexes with HTR3B or HTR3C or HTR3D or HTR3E. The homomeric complex is functional but exhibits low conductance with modified voltage dependence, and decreased agonist and antagonist affinity. Heteropentameric complexes display properties which resemble that of neuronal serotonin-activated channels in vivo. Interacts with RIC3. As to expression, expressed in cortex, intestine and liver. Not expressed in muscle or spleen.

It is found in the postsynaptic cell membrane. The protein localises to the cell membrane. The enzyme catalyses Na(+)(in) = Na(+)(out). The catalysed reaction is K(+)(in) = K(+)(out). It carries out the reaction Ca(2+)(in) = Ca(2+)(out). It catalyses the reaction Mg(2+)(in) = Mg(2+)(out). Forms serotonin (5-hydroxytryptamine/5-HT3)-activated cation-selective channel complexes, which when activated cause fast, depolarizing responses in neurons. In Cavia porcellus (Guinea pig), this protein is 5-hydroxytryptamine receptor 3A.